The following is a 277-amino-acid chain: Phosphoenolpyruvate synthase regulatory protein (277 aa).

Residue 157–164 (GVSRCGKT) participates in ADP binding.

It belongs to the pyruvate, phosphate/water dikinase regulatory protein family. PSRP subfamily.

It carries out the reaction [pyruvate, water dikinase] + ADP = [pyruvate, water dikinase]-phosphate + AMP + H(+). The catalysed reaction is [pyruvate, water dikinase]-phosphate + phosphate + H(+) = [pyruvate, water dikinase] + diphosphate. In terms of biological role, bifunctional serine/threonine kinase and phosphorylase involved in the regulation of the phosphoenolpyruvate synthase (PEPS) by catalyzing its phosphorylation/dephosphorylation. The chain is Phosphoenolpyruvate synthase regulatory protein from Escherichia fergusonii (strain ATCC 35469 / DSM 13698 / CCUG 18766 / IAM 14443 / JCM 21226 / LMG 7866 / NBRC 102419 / NCTC 12128 / CDC 0568-73).